The chain runs to 366 residues: Histidinol-phosphate aminotransferase 2 (366 aa).

A compositionally biased stretch (polar residues) spans 1-11 (MQVKDQLSSLQ). Positions 1 to 21 (MQVKDQLSSLQPYKPGKSPEQ) are disordered. Lysine 222 bears the N6-(pyridoxal phosphate)lysine mark.

The protein belongs to the class-II pyridoxal-phosphate-dependent aminotransferase family. Histidinol-phosphate aminotransferase subfamily. As to quaternary structure, homodimer. Pyridoxal 5'-phosphate is required as a cofactor.

It catalyses the reaction L-histidinol phosphate + 2-oxoglutarate = 3-(imidazol-4-yl)-2-oxopropyl phosphate + L-glutamate. It participates in amino-acid biosynthesis; L-histidine biosynthesis; L-histidine from 5-phospho-alpha-D-ribose 1-diphosphate: step 7/9. The polypeptide is Histidinol-phosphate aminotransferase 2 (hisC2) (Bacillus cereus (strain ATCC 14579 / DSM 31 / CCUG 7414 / JCM 2152 / NBRC 15305 / NCIMB 9373 / NCTC 2599 / NRRL B-3711)).